A 281-amino-acid polypeptide reads, in one-letter code: 2,3,4,5-tetrahydropyridine-2,6-dicarboxylate N-succinyltransferase (281 aa).

Substrate is bound by residues Arg-108 and Asp-145.

It belongs to the transferase hexapeptide repeat family. Homotrimer.

The protein localises to the cytoplasm. It carries out the reaction (S)-2,3,4,5-tetrahydrodipicolinate + succinyl-CoA + H2O = (S)-2-succinylamino-6-oxoheptanedioate + CoA. It functions in the pathway amino-acid biosynthesis; L-lysine biosynthesis via DAP pathway; LL-2,6-diaminopimelate from (S)-tetrahydrodipicolinate (succinylase route): step 1/3. The chain is 2,3,4,5-tetrahydropyridine-2,6-dicarboxylate N-succinyltransferase from Rhodopseudomonas palustris (strain BisA53).